The following is a 219-amino-acid chain: Proteasome subunit beta type-9 (219 aa).

Residues 1–20 (MLQAGAPTAGSFRTGEVHTG) constitute a propeptide, removed in mature form. T21 functions as the Nucleophile in the catalytic mechanism. An N6-acetyllysine mark is found at K53 and K109.

This sequence belongs to the peptidase T1B family. The 26S proteasome consists of a 20S proteasome core and two 19S regulatory subunits. The 20S proteasome core is composed of 28 subunits that are arranged in four stacked rings, resulting in a barrel-shaped structure. The two end rings are each formed by seven alpha subunits, and the two central rings are each formed by seven beta subunits. The catalytic chamber with the active sites is on the inside of the barrel. Component of the immunoproteasome, where it displaces the equivalent housekeeping subunit PSMB6. Component of the spermatoproteasome, a form of the proteasome specifically found in testis. Interacts with NCOA2 and NCOA3. In terms of processing, autocleaved. The resulting N-terminal Thr residue of the mature subunit is responsible for the nucleophile proteolytic activity. In terms of tissue distribution, detected in the cytoplasmic lobe of elongated spermatids, in residual bodies, and in the acrosomal cap of round spermatids.

It is found in the cytoplasm. The protein resides in the nucleus. The catalysed reaction is Cleavage of peptide bonds with very broad specificity.. In terms of biological role, the proteasome is a multicatalytic proteinase complex which is characterized by its ability to cleave peptides with Arg, Phe, Tyr, Leu, and Glu adjacent to the leaving group at neutral or slightly basic pH. The proteasome has an ATP-dependent proteolytic activity. This subunit is involved in antigen processing to generate class I binding peptides. The sequence is that of Proteasome subunit beta type-9 (Psmb9) from Rattus norvegicus (Rat).